Here is a 120-residue protein sequence, read N- to C-terminus: NAD(P)H-quinone oxidoreductase subunit 3 (120 aa).

A run of 3 helical transmembrane segments spans residues 6-26 (GYDA…LALI), 64-84 (MFAL…PWAV), and 89-109 (LGVL…VALA).

It belongs to the complex I subunit 3 family. In terms of assembly, NDH-1 can be composed of about 15 different subunits; different subcomplexes with different compositions have been identified which probably have different functions.

Its subcellular location is the cellular thylakoid membrane. The enzyme catalyses a plastoquinone + NADH + (n+1) H(+)(in) = a plastoquinol + NAD(+) + n H(+)(out). The catalysed reaction is a plastoquinone + NADPH + (n+1) H(+)(in) = a plastoquinol + NADP(+) + n H(+)(out). NDH-1 shuttles electrons from an unknown electron donor, via FMN and iron-sulfur (Fe-S) centers, to quinones in the respiratory and/or the photosynthetic chain. The immediate electron acceptor for the enzyme in this species is believed to be plastoquinone. Couples the redox reaction to proton translocation, and thus conserves the redox energy in a proton gradient. Cyanobacterial NDH-1 also plays a role in inorganic carbon-concentration. The polypeptide is NAD(P)H-quinone oxidoreductase subunit 3 (Parasynechococcus marenigrum (strain WH8102)).